The primary structure comprises 1124 residues: Translation initiation factor IF-2 (1124 aa).

Positions Ile-32–Ile-41 are enriched in low complexity. Disordered regions lie at residues Ile-32–His-451 and Leu-480–Arg-523. The span at Ala-94–Lys-104 shows a compositional bias: polar residues. The segment covering Val-134–Ala-173 has biased composition (low complexity). Over residues Gly-192 to Val-203 the composition is skewed to polar residues. A compositionally biased stretch (low complexity) spans Ser-214–Pro-227. Composition is skewed to basic and acidic residues over residues Ser-235–Gly-246 and Pro-261–Arg-272. 2 stretches are compositionally biased toward low complexity: residues Gly-274–Pro-283 and Arg-411–Arg-422. Residues Gly-425–Arg-439 show a composition bias toward basic and acidic residues. Basic residues-rich tracts occupy residues Ala-484–Ala-493 and Leu-500–Arg-514. One can recognise a tr-type G domain in the interval Arg-615–Leu-787. The G1 stretch occupies residues Gly-624–Thr-631. Gly-624–Thr-631 is a GTP binding site. Positions Gly-649–His-653 are G2. The G3 stretch occupies residues Asp-674 to Gly-677. GTP-binding positions include Asp-674–His-678 and Asn-728–Asp-731. The interval Asn-728–Asp-731 is G4. The segment at Ser-764 to Ile-766 is G5.

Belongs to the TRAFAC class translation factor GTPase superfamily. Classic translation factor GTPase family. IF-2 subfamily.

It localises to the cytoplasm. Its function is as follows. One of the essential components for the initiation of protein synthesis. Protects formylmethionyl-tRNA from spontaneous hydrolysis and promotes its binding to the 30S ribosomal subunits. Also involved in the hydrolysis of GTP during the formation of the 70S ribosomal complex. The sequence is that of Translation initiation factor IF-2 from Prochlorococcus marinus (strain MIT 9303).